The following is a 157-amino-acid chain: Cyclic pyranopterin monophosphate synthase (157 aa).

Substrate-binding positions include 74–76 and 110–111; these read MCH and ME. Aspartate 125 is an active-site residue.

This sequence belongs to the MoaC family. As to quaternary structure, homohexamer; trimer of dimers.

The enzyme catalyses (8S)-3',8-cyclo-7,8-dihydroguanosine 5'-triphosphate = cyclic pyranopterin phosphate + diphosphate. The protein operates within cofactor biosynthesis; molybdopterin biosynthesis. In terms of biological role, catalyzes the conversion of (8S)-3',8-cyclo-7,8-dihydroguanosine 5'-triphosphate to cyclic pyranopterin monophosphate (cPMP). The polypeptide is Cyclic pyranopterin monophosphate synthase (Peptoclostridium acidaminophilum (Eubacterium acidaminophilum)).